The primary structure comprises 505 residues: Phosphoglycerate kinase, glycosomal (505 aa).

(2R)-3-phosphoglycerate contacts are provided by Val29, Asp30, Phe31, Asn32, Arg45, Ser67, His68, Gly70, Arg71, Leu219, Arg220, His256, and Arg257. Residues Gly302 and Ala303 each coordinate ADP. Gly302 lines the CDP pocket. Ala303 and Lys304 together coordinate AMP. Residue Ala303 coordinates ATP. Ala303 contacts Mg(2+). Lys304 contributes to the (2R)-3-phosphoglycerate binding site. Residue Asp307 coordinates CDP. Asp307 provides a ligand contact to Mg(2+). Residues Lys308 and Gly326 each coordinate ADP. Lys308 is an AMP binding site. Lys308 is an ATP binding site. CDP is bound at residue Gly326. AMP contacts are provided by Gly327 and Gly399. ATP is bound by residues Gly327 and Gly399. ADP-binding residues include Gly399 and Asn423. Gly424, Leu426, and Phe429 together coordinate CDP. Residues Phe429, Glu430, Asp462, and Thr463 each coordinate ADP. Glu430 contributes to the AMP binding site. ATP-binding residues include Glu430, Asp462, and Thr463. Asp462 is a binding site for Mg(2+).

It belongs to the phosphoglycerate kinase family. In terms of assembly, monomer. The cofactor is Mg(2+).

It localises to the glycosome. The enzyme catalyses (2R)-3-phosphoglycerate + ATP = (2R)-3-phospho-glyceroyl phosphate + ADP. The protein operates within carbohydrate degradation; glycolysis; pyruvate from D-glyceraldehyde 3-phosphate: step 2/5. In Crithidia fasciculata, this protein is Phosphoglycerate kinase, glycosomal (PGKA).